Reading from the N-terminus, the 686-residue chain is Mannan-binding lectin serine protease 2 (686 aa).

An N-terminal signal peptide occupies residues 1-15 (MRLLTLLGLLCGSVA). Residues 16–137 (TPLGPKWPEP…TGFEAFYAAE (122 aa)) form the CUB 1 domain. Residues Glu67, Asp75, Asp120, Ser122, Asn123, Asp138, Ile139, and Glu141 each contribute to the Ca(2+) site. Cys72 and Cys90 form a disulfide bridge. Residues 138–181 (DIDECQVAPGEAPTCDHHCHNHLGGFYCSCRAGYVLHRNKRTCS) form the EGF-like; calcium-binding domain. 12 disulfides stabilise this stretch: Cys142–Cys156, Cys152–Cys165, Cys167–Cys180, Cys184–Cys211, Cys241–Cys259, Cys300–Cys348, Cys328–Cys361, Cys366–Cys412, Cys396–Cys430, Cys434–Cys552, Cys598–Cys618, and Cys629–Cys660. 3 residues coordinate Ca(2+): Asn158, His159, and Gly162. At Asn158 the chain carries (3R)-3-hydroxyasparagine. The CUB 2 domain maps to 184 to 296 (CSGQVFTQRS…TGWKIHYTST (113 aa)). 2 Sushi domains span residues 298–363 (QPCP…ACSI) and 364–432 (VDCG…VCEP). Positions 445-684 (IYGGQKAKPG…YIPWIENIIS (240 aa)) constitute a Peptidase S1 domain. Residues His483 and Asp532 each act as charge relay system in the active site. Ser633 (charge relay system) is an active-site residue.

This sequence belongs to the peptidase S1 family. Homodimer; disulfide-linked. Binds MBL2. Isoform 2 binds to MASP1. Binds SERPING1. Dimerization and MBL2 binding requires calcium ions. The iron and 2-oxoglutarate dependent 3-hydroxylation of aspartate and asparagine is (R) stereospecific within EGF domains. Post-translationally, activated by cleavage after Arg-444. The uncleaved zymogen is inactive towards synthetic substrates, but has sufficient activity to effect autocatalytic cleavage. As to expression, plasma.

Its subcellular location is the secreted. The catalysed reaction is Selective cleavage after Arg-223 in complement component C2 (-Ser-Leu-Gly-Arg-|-Lys-Ile-Gln-Ile) and after Arg-76 in complement component C4 (-Gly-Leu-Gln-Arg-|-Ala-Leu-Glu-Ile).. Its function is as follows. Serum protease that plays an important role in the activation of the complement system via mannose-binding lectin. After activation by auto-catalytic cleavage it cleaves C2 and C4, leading to their activation and to the formation of C3 convertase. The sequence is that of Mannan-binding lectin serine protease 2 (MASP2) from Homo sapiens (Human).